The following is a 312-amino-acid chain: TATA box-binding protein-like 2 (312 aa).

Positions 65-115 (DELSTQDEPSQVEKESKNEDSGIYTDCPQKESTQADIDTSNSAQNTSQFNL) are disordered. Residues 75–84 (QVEKESKNED) are compositionally biased toward basic and acidic residues. Residues 94-115 (KESTQADIDTSNSAQNTSQFNL) show a composition bias toward polar residues.

Belongs to the TBP family. In adults, expressed in the gonads, with expression much higher in the ovary than the testis (at protein level). Shows a small amount of expression in other adult organs, including the brain and kidney. Embryonic expression is mostly ubiquitous except in early gastrula embryos where expression is asymmetric.

It is found in the nucleus. In terms of biological role, TATA box-binding transcription factor. Members of the TBP family are differentially required to regulate transcription and development during early embryogenesis. Commits mesoderm to the hematopoietic lineage during hemopoiesis, acting via mespa. Binds to the mespa promoter. The chain is TATA box-binding protein-like 2 from Danio rerio (Zebrafish).